We begin with the raw amino-acid sequence, 195 residues long: Protein GrpE (195 aa).

A disordered region spans residues 1-30; that stretch reads MSEQEKVEQEEISAELETQNEQEKPMEETE. Positions 10–20 are enriched in acidic residues; sequence EEISAELETQN.

This sequence belongs to the GrpE family. Homodimer.

It is found in the cytoplasm. Functionally, participates actively in the response to hyperosmotic and heat shock by preventing the aggregation of stress-denatured proteins, in association with DnaK and GrpE. It is the nucleotide exchange factor for DnaK and may function as a thermosensor. Unfolded proteins bind initially to DnaJ; upon interaction with the DnaJ-bound protein, DnaK hydrolyzes its bound ATP, resulting in the formation of a stable complex. GrpE releases ADP from DnaK; ATP binding to DnaK triggers the release of the substrate protein, thus completing the reaction cycle. Several rounds of ATP-dependent interactions between DnaJ, DnaK and GrpE are required for fully efficient folding. In Histophilus somni (strain 2336) (Haemophilus somnus), this protein is Protein GrpE.